Consider the following 205-residue polypeptide: Small ribosomal subunit protein uS4 (205 aa).

The segment at 19-45 is disordered; sequence IWGRSKSPVNRREYGPGQHGQRRKGKL. The S4 RNA-binding domain maps to 94–157; it reads RRLDAVVYRA…KQMALVLEAV (64 aa).

It belongs to the universal ribosomal protein uS4 family. In terms of assembly, part of the 30S ribosomal subunit. Contacts protein S5. The interaction surface between S4 and S5 is involved in control of translational fidelity.

One of the primary rRNA binding proteins, it binds directly to 16S rRNA where it nucleates assembly of the body of the 30S subunit. Its function is as follows. With S5 and S12 plays an important role in translational accuracy. The chain is Small ribosomal subunit protein uS4 from Azorhizobium caulinodans (strain ATCC 43989 / DSM 5975 / JCM 20966 / LMG 6465 / NBRC 14845 / NCIMB 13405 / ORS 571).